A 2280-amino-acid polypeptide reads, in one-letter code: Genome polyprotein (2280 aa).

The region spanning 454-608 (ETQANNIRST…EEWKKRNPGK (155 aa)) is the SF3 helicase domain. ATP is bound at residue 480 to 487 (GAPGIGKT). Residue Tyr965 is modified to O-(5'-phospho-RNA)-tyrosine. A Peptidase C24 domain is found at 1054-1202 (APTAIVEFTQ…TKVAQRVVKE (149 aa)). Residues His1084, Glu1105, and Cys1169 each act as for 3CLpro activity in the active site. In terms of domain architecture, RdRp catalytic spans 1442 to 1567 (GVLYCLDYSK…SVCPATASIF (126 aa)). The disordered stretch occupies residues 1722–1746 (GNGSNPEPKQSNNPMVVDPPGTTGP). Polar residues predominate over residues 1723–1735 (NGSNPEPKQSNNP).

In terms of assembly, homodimer. Homomultimer. Specific enzymatic cleavages in vivo yield mature proteins. Pro-Pol is first autocatalytically cleaved, then processes the whole polyprotein. Post-translationally, VPg is uridylylated by the polymerase and is covalently attached to the 5'-end of the polyadenylated genomic and subgenomic RNAs. This uridylylated form acts as a nucleotide-peptide primer for the polymerase.

Its subcellular location is the virion. The protein resides in the host cytoplasm. The enzyme catalyses a ribonucleoside 5'-triphosphate + H2O = a ribonucleoside 5'-diphosphate + phosphate + H(+). It carries out the reaction RNA(n) + a ribonucleoside 5'-triphosphate = RNA(n+1) + diphosphate. The catalysed reaction is Endopeptidase with a preference for cleavage when the P1 position is occupied by Glu-|-Xaa and the P1' position is occupied by Gly-|-Yaa.. Functionally, together with NTPase and NS4, initiates the formation of the replication complex. Induces the proliferation of the host smooth ER membranes forming long tubular structures. These remodeled membranes probably form the viral factories that contain the replication complex. Displays NTPase activity, but no helicase activity. Induces the formation of convoluted membranes derived from the host ER. These remodeled membranes probably form the viral factories that contain the replication complex. Together with NS2 and NS4, initiates the formation of the replication complex. In terms of biological role, probable key protein responsible for the formation of membrane alterations by the virus. Induces the formation of convoluted membranes derived from the host ER. These remodeled membranes probably form the viral factories that contain the replication complex. Together with NS2 and NTPase, initiates the formation of the replication complex. Its function is as follows. Viral genome-linked protein is covalently linked to the 5'-end of the positive-strand, negative-strand genomic RNAs and subgenomic RNA. Acts as a genome-linked replication primer. May recruit ribosome to viral RNA thereby promoting viral proteins translation. Interacts with host translation initiation complex to allow the translation of viral proteins. Functionally, protease-polymerase p76 processes the polyprotein: Pro-Pol is first released by autocleavage, then all other proteins are cleaved. Cleaves host translation initiation factor eIF4G1, eIF4G2 and PABP1 thereby inducing a shutdown of host protein synthesis. This shutdown may not prevent viral mRNA from being translated since viral Vpg replaces the cap. It is also an RNA-directed RNA polymerase which replicates genomic and antigenomic viral RNA by recognizing specific signals. Also transcribes a subgenomic mRNA by initiating RNA synthesis internally on antigenomic RNA. This sgRNA codes for structural proteins. Catalyzes the covalent attachment VPg with viral RNAs. Capsid protein self assembles to form an icosahedral capsid with a T=3 symmetry, about 38 nm in diameter, and consisting of 180 capsid proteins. The capsid encapsulate the genomic RNA and VP2 proteins. Attaches virion to target cells, inducing endocytosis of the viral particle. Acidification of the endosome induces conformational change of capsid protein thereby injecting virus genomic RNA into host cytoplasm. The polypeptide is Genome polyprotein (Sapporo virus (isolate GI/Human/Germany/pJG-Sap01) (Hu/Dresden/pJG-Sap01/DE)).